The sequence spans 461 residues: Argininosuccinate lyase (461 aa).

It belongs to the lyase 1 family. Argininosuccinate lyase subfamily.

The protein resides in the cytoplasm. It catalyses the reaction 2-(N(omega)-L-arginino)succinate = fumarate + L-arginine. It participates in amino-acid biosynthesis; L-arginine biosynthesis; L-arginine from L-ornithine and carbamoyl phosphate: step 3/3. The sequence is that of Argininosuccinate lyase from Desulfitobacterium hafniense (strain DSM 10664 / DCB-2).